Reading from the N-terminus, the 154-residue chain is Transcription antitermination protein NusB (154 aa).

The protein belongs to the NusB family.

Involved in transcription antitermination. Required for transcription of ribosomal RNA (rRNA) genes. Binds specifically to the boxA antiterminator sequence of the ribosomal RNA (rrn) operons. The protein is Transcription antitermination protein NusB of Oleidesulfovibrio alaskensis (strain ATCC BAA-1058 / DSM 17464 / G20) (Desulfovibrio alaskensis).